Reading from the N-terminus, the 390-residue chain is Pyruvate dehydrogenase E1 component subunit alpha, somatic form, mitochondrial (390 aa).

The N-terminal 29 residues, 1-29 (MRKMLAAVSRVLAGAAQKPASRVLVASRN), are a transit peptide targeting the mitochondrion. Lys-63 is subject to N6-acetyllysine; alternate. Lys-63 is modified (N6-succinyllysine; alternate). Pyruvate-binding residues include His-92, Tyr-118, Arg-119, Ala-157, Gly-165, Val-167, Asp-196, Gly-197, Ala-198, Asn-225, and Tyr-227. 2 residues coordinate thiamine diphosphate: Tyr-118 and Arg-119. The thiamine diphosphate site is built by Gly-165, Val-167, Asp-196, Gly-197, Ala-198, and Asn-225. Residue Asp-196 participates in Mg(2+) binding. Mg(2+) contacts are provided by Asn-225 and Tyr-227. Ser-232 carries the phosphoserine; by PDK1 modification. N6-acetyllysine; alternate is present on Lys-244. At Lys-244 the chain carries N6-succinyllysine; alternate. Lys-267 is modified (N6-acetyllysine). The residue at position 277 (Lys-277) is an N6-succinyllysine. His-292 provides a ligand contact to thiamine diphosphate. Ser-293 carries the phosphoserine; by PDK1, PDK2, PDK3 and PDK4 modification. Position 295 is a phosphoserine (Ser-295). Position 300 is a phosphoserine; by PDK1, PDK2, PDK3 and PDK4 (Ser-300). Tyr-301 bears the Phosphotyrosine mark. Lys-313 carries the post-translational modification N6-acetyllysine; alternate. Position 313 is an N6-succinyllysine; alternate (Lys-313). Residues Lys-321 and Lys-336 each carry the N6-acetyllysine modification. Lys-385 is subject to N6-succinyllysine.

In terms of assembly, heterotetramer of two PDHA1 and two PDHB subunits. The heterotetramer interacts with DLAT, and is part of the multimeric pyruvate dehydrogenase complex that contains multiple copies of pyruvate dehydrogenase (E1), dihydrolipoamide acetyltransferase (DLAT, E2) and lipoamide dehydrogenase (DLD, E3). These subunits are bound to an inner core composed of about 48 DLAT and 12 PDHX molecules. Thiamine diphosphate is required as a cofactor. It depends on Mg(2+) as a cofactor. Phosphorylation at Ser-232, Ser-293 and Ser-300 by PDK family kinases inactivates the enzyme; for this phosphorylation at a single site is sufficient. Phosphorylation at Ser-293 interferes with access to active site, and thereby inactivates the enzyme. Dephosphorylation at all three sites, i.e. at Ser-232, Ser-293 and Ser-300, is required for reactivation. Post-translationally, acetylation alters the phosphorylation pattern. Deacetylated by SIRT3. In all tissues, but in very low amount in testis.

The protein resides in the mitochondrion matrix. It catalyses the reaction N(6)-[(R)-lipoyl]-L-lysyl-[protein] + pyruvate + H(+) = N(6)-[(R)-S(8)-acetyldihydrolipoyl]-L-lysyl-[protein] + CO2. Its activity is regulated as follows. Pyruvate dehydrogenase activity is inhibited by phosphorylation of PDHA1; it is reactivated by dephosphorylation. In terms of biological role, the pyruvate dehydrogenase complex catalyzes the overall conversion of pyruvate to acetyl-CoA and CO(2), and thereby links the glycolytic pathway to the tricarboxylic cycle. This Rattus norvegicus (Rat) protein is Pyruvate dehydrogenase E1 component subunit alpha, somatic form, mitochondrial (Pdha1).